Reading from the N-terminus, the 140-residue chain is Large ribosomal subunit protein uL13 (140 aa).

The protein belongs to the universal ribosomal protein uL13 family. In terms of assembly, part of the 50S ribosomal subunit.

In terms of biological role, this protein is one of the early assembly proteins of the 50S ribosomal subunit, although it is not seen to bind rRNA by itself. It is important during the early stages of 50S assembly. The polypeptide is Large ribosomal subunit protein uL13 (Methanosarcina barkeri (strain Fusaro / DSM 804)).